A 714-amino-acid chain; its full sequence is DNA ligase (714 aa).

NAD(+) is bound by residues D47–D51, S96–L97, and E130. The active-site N6-AMP-lysine intermediate is the K132. NAD(+) is bound by residues R153, E190, K306, and K330. Positions 435, 438, 453, and 459 each coordinate Zn(2+). The BRCT domain maps to R636–G714.

This sequence belongs to the NAD-dependent DNA ligase family. LigA subfamily. The cofactor is Mg(2+). Mn(2+) serves as cofactor.

The catalysed reaction is NAD(+) + (deoxyribonucleotide)n-3'-hydroxyl + 5'-phospho-(deoxyribonucleotide)m = (deoxyribonucleotide)n+m + AMP + beta-nicotinamide D-nucleotide.. In terms of biological role, DNA ligase that catalyzes the formation of phosphodiester linkages between 5'-phosphoryl and 3'-hydroxyl groups in double-stranded DNA using NAD as a coenzyme and as the energy source for the reaction. It is essential for DNA replication and repair of damaged DNA. The chain is DNA ligase from Nitrobacter hamburgensis (strain DSM 10229 / NCIMB 13809 / X14).